We begin with the raw amino-acid sequence, 660 residues long: DNA polymerase alpha-associated DNA helicase A (660 aa).

Residue glycine 232–threonine 239 coordinates ATP.

Belongs to the DNA2/NAM7 helicase family. In terms of assembly, associates with the hexameric DNA polymerase alpha.

It localises to the cytoplasm. Its subcellular location is the nucleus. It catalyses the reaction ATP + H2O = ADP + phosphate + H(+). DNA polymerase alpha-associated DNA helicase which may be involved in DNA replication. The chain is DNA polymerase alpha-associated DNA helicase A (hcs1) from Schizosaccharomyces pombe (strain 972 / ATCC 24843) (Fission yeast).